A 320-amino-acid polypeptide reads, in one-letter code: L-lactate dehydrogenase (320 aa).

NAD(+)-binding positions include V19, D40, R45, and 85 to 86; that span reads GA. Substrate contacts are provided by Q88 and R94. NAD(+) is bound by residues S107, 124-126, and S149; that span reads ITN. Position 126–129 (126–129) interacts with substrate; sequence NPVD. Substrate is bound at residue 154–157; that stretch reads DSAR. Beta-D-fructose 1,6-bisphosphate-binding residues include R159 and H174. The active-site Proton acceptor is the H181. Phosphotyrosine is present on Y228. Residue T237 participates in substrate binding.

This sequence belongs to the LDH/MDH superfamily. LDH family. In terms of assembly, homotetramer.

The protein resides in the cytoplasm. The catalysed reaction is (S)-lactate + NAD(+) = pyruvate + NADH + H(+). Its pathway is fermentation; pyruvate fermentation to lactate; (S)-lactate from pyruvate: step 1/1. Allosterically activated by fructose 1,6-bisphosphate (FBP). In terms of biological role, catalyzes the conversion of lactate to pyruvate. The sequence is that of L-lactate dehydrogenase from Bifidobacterium animalis subsp. lactis (strain AD011).